A 539-amino-acid polypeptide reads, in one-letter code: Putative cysteine ligase BshC (539 aa).

Residues 249–270 (VETNDEVTNRLNESQAAMKRAG) adopt a coiled-coil conformation.

It belongs to the BshC family.

Involved in bacillithiol (BSH) biosynthesis. May catalyze the last step of the pathway, the addition of cysteine to glucosamine malate (GlcN-Mal) to generate BSH. The polypeptide is Putative cysteine ligase BshC (Bacillus pumilus (strain SAFR-032)).